A 49-amino-acid polypeptide reads, in one-letter code: Large ribosomal subunit protein bL33B (49 aa).

Belongs to the bacterial ribosomal protein bL33 family.

This chain is Large ribosomal subunit protein bL33B, found in Geobacillus thermodenitrificans (strain NG80-2).